A 309-amino-acid polypeptide reads, in one-letter code: Homoserine kinase (309 aa).

91-101 lines the ATP pocket; the sequence is PLARGLGSSAA.

This sequence belongs to the GHMP kinase family. Homoserine kinase subfamily.

The protein resides in the cytoplasm. It catalyses the reaction L-homoserine + ATP = O-phospho-L-homoserine + ADP + H(+). The protein operates within amino-acid biosynthesis; L-threonine biosynthesis; L-threonine from L-aspartate: step 4/5. Functionally, catalyzes the ATP-dependent phosphorylation of L-homoserine to L-homoserine phosphate. The chain is Homoserine kinase from Bacillus velezensis (strain DSM 23117 / BGSC 10A6 / LMG 26770 / FZB42) (Bacillus amyloliquefaciens subsp. plantarum).